A 557-amino-acid polypeptide reads, in one-letter code: Portal protein (557 aa).

Belongs to the herpesviridae portal protein family. As to quaternary structure, homododecamerizes. Interacts with terminase subunits TRM1 and TRM3.

The protein localises to the virion. The protein resides in the host nucleus. Functionally, forms a portal in the viral capsid through which viral DNA is translocated during DNA packaging. Assembles as a dodecamer at a single fivefold axe of the T=16 icosahedric capsid. Binds to the molecular motor that translocates the viral DNA, termed terminase. This Connochaetes taurinus (Blue wildebeest) protein is Portal protein (43).